Here is a 293-residue protein sequence, read N- to C-terminus: Ribosomal protein L11 methyltransferase (293 aa).

Residues Thr-145, Gly-166, Asp-188, and Asn-229 each contribute to the S-adenosyl-L-methionine site.

Belongs to the methyltransferase superfamily. PrmA family.

It is found in the cytoplasm. It carries out the reaction L-lysyl-[protein] + 3 S-adenosyl-L-methionine = N(6),N(6),N(6)-trimethyl-L-lysyl-[protein] + 3 S-adenosyl-L-homocysteine + 3 H(+). Functionally, methylates ribosomal protein L11. The sequence is that of Ribosomal protein L11 methyltransferase from Idiomarina loihiensis (strain ATCC BAA-735 / DSM 15497 / L2-TR).